The sequence spans 546 residues: Peptidoglycan transport ATP-binding protein YejF (546 aa).

ABC transporter domains are found at residues 12 to 261 and 291 to 530; these read VRDL…RHLL and IKAG…KALL. ATP contacts are provided by residues 46 to 53 and 323 to 330; these read GESGSGKS and GESGSGKT.

It belongs to the ABC transporter superfamily. As to quaternary structure, the complex is composed of one ATP-binding protein (YejF), two transmembrane proteins (YejB and YejE) and a solute-binding protein (YepA or YejA).

It is found in the cell inner membrane. Functionally, part of the ABC transporter complex YejBEF-YepA involved in the uptake of muropeptides, the breakdown products of cell wall peptidoglycan. The import of muropeptides into the cell enables peptidoglycan recycling, which is vital for cell wall integrity in this bacterium. Is also probably part of the ABC transporter complex YejABEF, which is likely involved in broad-spectrum peptide import. Responsible for energy coupling to the transport system. The chain is Peptidoglycan transport ATP-binding protein YejF from Agrobacterium fabrum (strain C58 / ATCC 33970) (Agrobacterium tumefaciens (strain C58)).